The primary structure comprises 209 residues: COP9 signalosome complex subunit 8 (209 aa).

The 172-residue stretch at 8–179 folds into the PCI domain; that stretch reads ESAFSFKKLL…GALDVSFNKF (172 aa). At Ser-175 the chain carries Phosphoserine.

Belongs to the CSN8 family. As to quaternary structure, component of the CSN complex, composed of COPS1/GPS1, COPS2, COPS3, COPS4, COPS5, COPS6, COPS7 (COPS7A or COPS7B), COPS8 and COPS9. In the complex, it probably interacts directly with COPS3, COPS4 and COPS7 (COPS7A or COPS7B).

The protein localises to the cytoplasm. It is found in the nucleus. Component of the COP9 signalosome complex (CSN), a complex involved in various cellular and developmental processes. The CSN complex is an essential regulator of the ubiquitin (Ubl) conjugation pathway by mediating the deneddylation of the cullin subunits of SCF-type E3 ligase complexes, leading to decrease the Ubl ligase activity of SCF-type complexes such as SCF, CSA or DDB2. The complex is also involved in phosphorylation of p53/TP53, c-jun/JUN, IkappaBalpha/NFKBIA, ITPK1 and IRF8/ICSBP, possibly via its association with CK2 and PKD kinases. CSN-dependent phosphorylation of TP53 and JUN promotes and protects degradation by the Ubl system, respectively. This Pongo abelii (Sumatran orangutan) protein is COP9 signalosome complex subunit 8 (COPS8).